Here is a 265-residue protein sequence, read N- to C-terminus: Flagellar brake protein YcgR (265 aa).

A PilZ domain is found at 135 to 252 (QRRESYRLET…DETIQRYIFR (118 aa)).

It belongs to the YcgR family. Monomer. Interacts with the flagellar basal bodies.

It is found in the bacterial flagellum basal body. Acts as a flagellar brake, regulating swimming and swarming in a bis-(3'-5') cyclic diguanylic acid (c-di-GMP)-dependent manner. Binds 1 c-di-GMP dimer per subunit. Increasing levels of c-di-GMP lead to decreased motility. The chain is Flagellar brake protein YcgR from Xanthomonas campestris pv. campestris (strain B100).